The primary structure comprises 316 residues: CD-NTase-associated protein 12 (316 aa).

The TIR domain occupies 4-121; it reads RIFIGSSSEG…MLGITQTRYE (118 aa). Residues 161 to 316 are STING domain; it reads STVIAISYFE…ECVEIIEPQP (156 aa). 3',3'-c-di-GMP is bound by residues Phe172, Pro237, and Asp253.

It in the C-terminal section; belongs to the bacterial STING family. In terms of assembly, forms homodimers; in the presence of c-di-GMP forms filaments with an ordered array of parallel-stacked subunits.

It carries out the reaction NAD(+) + H2O = ADP-D-ribose + nicotinamide + H(+). With respect to regulation, NAD(+) hydrolase activity is strongly stimulated by c-di-GMP, weakly by 3'3'-cGAMP, very weakly by c-di-AMP but not at all by 2'3'-cGAMP. Self-association of TIR domains is required for NADase activity. In terms of biological role, effector protein of a CBASS antiviral system with NAD(+) hydrolase activity. CBASS (cyclic oligonucleotide-based antiphage signaling system) provides immunity against bacteriophage. The CD-NTase protein synthesizes cyclic nucleotides in response to infection; these serve as specific second messenger signals. The signals activate a diverse range of effectors, leading to bacterial cell death and thus abortive phage infection. A type I-D(GG) CBASS system. Functionally, binds c-di-GMP (synthesized by the cognate CdnE encoded upstream in the same operon) but not c-di-AMP, 2'-3'-cGAMP, 3'-3'-cGAMP or cUMP-AMP (tested without the N-terminal TIR domain). Upon activation by c-di-GMP forms filaments which hydrolyze NAD(+); filament formation is required for enzyme activation. The chain is CD-NTase-associated protein 12 from Lachnospiraceae bacterium (strain RUG226).